The primary structure comprises 463 residues: Peptidase inhibitor 16 (463 aa).

A signal peptide spans 1–27; that stretch reads MHGSCSFLMLLLPLLLLLVATTGPVGA. An SCP domain is found at 37–165; the sequence is VELHNLYRAQ…TNIELLVCNY (129 aa). Asn114 carries an N-linked (GlcNAc...) asparagine glycan. 3 disordered regions span residues 262–281, 303–341, and 383–408; these read TQAP…TEAP, EPVT…DPKM, and LQAT…SATA. A compositionally biased stretch (basic and acidic residues) spans 318 to 327; sequence SADKVTDKTK. Residues 386–395 are O-glycosylated at one site; that stretch reads TLDHTGHTSS. A compositionally biased stretch (polar residues) spans 392–408; sequence HTSSKSLPNFPNTSATA. 2 N-linked (GlcNAc...) asparagine glycosylation sites follow: Asn403 and Asn409.

The protein belongs to the CRISP family. Interacts with PSP94/MSMB. Post-translationally, N- and O-glycosylated. O-glycosylated with core 1 or possibly core 8 glycans. Expressed in prostate, testis, ovary and intestine. Concentrates in prostate cancer patient's sera.

Its subcellular location is the secreted. In terms of biological role, may inhibit cardiomyocyte growth. In Homo sapiens (Human), this protein is Peptidase inhibitor 16 (PI16).